The primary structure comprises 189 residues: Thermostable direct hemolysin-related (189 aa).

The signal sequence occupies residues 1–24 (MKYRYFAKKSFLFISMLAAFKTFA). An intrachain disulfide couples Cys175 to Cys185.

This sequence belongs to the TDH hemolysin family. Homodimer.

Its function is as follows. Bacterial hemolysins are exotoxins that attack blood cell membranes and cause cell rupture by mechanisms not clearly defined. This chain is Thermostable direct hemolysin-related (tdh3), found in Vibrio parahaemolyticus.